The primary structure comprises 82 residues: DNA-directed RNA polymerase subunit Rpo5 (82 aa).

This sequence belongs to the archaeal Rpo5/eukaryotic RPB5 RNA polymerase subunit family. In terms of assembly, part of the RNA polymerase complex.

It localises to the cytoplasm. The enzyme catalyses RNA(n) + a ribonucleoside 5'-triphosphate = RNA(n+1) + diphosphate. In terms of biological role, DNA-dependent RNA polymerase (RNAP) catalyzes the transcription of DNA into RNA using the four ribonucleoside triphosphates as substrates. The chain is DNA-directed RNA polymerase subunit Rpo5 from Thermococcus kodakarensis (strain ATCC BAA-918 / JCM 12380 / KOD1) (Pyrococcus kodakaraensis (strain KOD1)).